The chain runs to 233 residues: Fibrillarin-like rRNA/tRNA 2'-O-methyltransferase (233 aa).

Residues 90 to 91 (TT), 109 to 110 (EF), 134 to 135 (DA), and 154 to 157 (DVAQ) each bind S-adenosyl-L-methionine.

It belongs to the methyltransferase superfamily. Fibrillarin family. In terms of assembly, interacts with nop5. Component of box C/D small ribonucleoprotein (sRNP) particles that contain rpl7ae, FlpA and nop5, plus a guide RNA.

Its function is as follows. Involved in pre-rRNA and tRNA processing. Utilizes the methyl donor S-adenosyl-L-methionine to catalyze the site-specific 2'-hydroxyl methylation of ribose moieties in rRNA and tRNA. Site specificity is provided by a guide RNA that base pairs with the substrate. Methylation occurs at a characteristic distance from the sequence involved in base pairing with the guide RNA. The protein is Fibrillarin-like rRNA/tRNA 2'-O-methyltransferase of Aeropyrum pernix (strain ATCC 700893 / DSM 11879 / JCM 9820 / NBRC 100138 / K1).